The chain runs to 264 residues: Thiazole synthase (264 aa).

Lys-106 acts as the Schiff-base intermediate with DXP in catalysis. Residues Gly-167, 193–194 (AG), and 215–216 (NS) each bind 1-deoxy-D-xylulose 5-phosphate.

This sequence belongs to the ThiG family. In terms of assembly, homotetramer. Forms heterodimers with either ThiH or ThiS.

Its subcellular location is the cytoplasm. The catalysed reaction is [ThiS sulfur-carrier protein]-C-terminal-Gly-aminoethanethioate + 2-iminoacetate + 1-deoxy-D-xylulose 5-phosphate = [ThiS sulfur-carrier protein]-C-terminal Gly-Gly + 2-[(2R,5Z)-2-carboxy-4-methylthiazol-5(2H)-ylidene]ethyl phosphate + 2 H2O + H(+). Its pathway is cofactor biosynthesis; thiamine diphosphate biosynthesis. Functionally, catalyzes the rearrangement of 1-deoxy-D-xylulose 5-phosphate (DXP) to produce the thiazole phosphate moiety of thiamine. Sulfur is provided by the thiocarboxylate moiety of the carrier protein ThiS. In vitro, sulfur can be provided by H(2)S. The sequence is that of Thiazole synthase from Prochlorococcus marinus (strain MIT 9301).